The sequence spans 479 residues: Adenosylhomocysteinase (479 aa).

Residues Thr-56, Asp-133, and Glu-199 each coordinate substrate. 200-202 (TTT) is a binding site for NAD(+). Residues Lys-229 and Asp-233 each contribute to the substrate site. Residues Asn-234, 263 to 268 (GYGDVG), Glu-286, Asn-321, 342 to 344 (IGH), and Asn-390 contribute to the NAD(+) site.

This sequence belongs to the adenosylhomocysteinase family. As to quaternary structure, homotetramer. It depends on NAD(+) as a cofactor.

The catalysed reaction is S-adenosyl-L-homocysteine + H2O = L-homocysteine + adenosine. It functions in the pathway amino-acid biosynthesis; L-homocysteine biosynthesis; L-homocysteine from S-adenosyl-L-homocysteine: step 1/1. In terms of biological role, adenosylhomocysteine is a competitive inhibitor of S-adenosyl-L-methionine-dependent methyl transferase reactions; therefore adenosylhomocysteinase may play a key role in the control of methylations via regulation of the intracellular concentration of adenosylhomocysteine. The chain is Adenosylhomocysteinase from Plasmodium chabaudi chabaudi.